The sequence spans 390 residues: Protein shisa-9 (390 aa).

An N-terminal signal peptide occupies residues 1–22; sequence MTGIRAIFYYFLVDLLTLLCWA. At 23–134 the chain is on the extracellular side; the sequence is QGKGGQHFGS…DPSHDPTRDK (112 aa). N40 and N74 each carry an N-linked (GlcNAc...) asparagine glycan. The helical transmembrane segment at 135-155 threads the bilayer; the sequence is TNLIVYIICGVVAVMVLVGIF. Residues 156 to 390 lie on the Cytoplasmic side of the membrane; sequence TKLGLEKAHR…VTNSKTEVTV (235 aa).

Belongs to the shisa family. SHISA9 subfamily. In terms of assembly, component of some AMPA receptors (ionotropic glutamate receptors) complex.

The protein localises to the cell projection. Its subcellular location is the dendritic spine membrane. The protein resides in the synapse. Functionally, regulator of short-term neuronal synaptic plasticity in the dentate gyrus. Associates with AMPA receptors (ionotropic glutamate receptors) in synaptic spines and promotes AMPA receptor desensitization at excitatory synapses. The polypeptide is Protein shisa-9 (shisa9) (Xenopus tropicalis (Western clawed frog)).